A 535-amino-acid chain; its full sequence is MTKYIFVTGGVVSSLGKGITAASLGRLLKNRGLNVTIQKFDPYINVDPGTMSPYQHGEVFVTDDGAETDLDLGHYERFIDINLNKYSNVTTGKIYSSVLQKERRGEYLGGTVQVIPHITNEIKERVYRSGRETNADVVITEIGGTVGDIESLPFLEAIRQIKSDIGRDNVMYIHCTLIPYLKAAGEMKTKPTQHSVKELRSLGIQPNIIVVRTEMPVSQDMKDKLALFCDIDTKAVIEARDADTLYAVPLSLQEQNMDQIVCDHLKLDNPAADMTEWTALVEKVRNLSKKTKIALVGKYVELQDAYISVVEALRHAGYSFDTDVEVKWVNAEHVTAENVQELVGDTDGILVPGGFGDRGVEGKIVAIQYARENKVPFLGICLGMQLASIEFARNVLGLEGANSSEINPDTPYAIIDLLPEQKDVEDLGGTLRLGLYPCKLSEETNAYNAYNEPVVYERHRHRYEFNNQFRPDMEKAGFVFSGTSPDGRLVEIIELKDHPWFVAAQFHPELVSRPNRPQPLFHDFVKASLTNKESK.

The segment at 1–267 (MTKYIFVTGG…DQIVCDHLKL (267 aa)) is amidoligase domain. Residue Ser-13 participates in CTP binding. Ser-13 provides a ligand contact to UTP. 14 to 19 (SLGKGI) is an ATP binding site. An L-glutamine-binding site is contributed by Tyr-54. ATP is bound at residue Asp-71. 2 residues coordinate Mg(2+): Asp-71 and Glu-141. Residues 148–150 (DIE), 188–193 (KTKPTQ), and Lys-224 contribute to the CTP site. Residues 188 to 193 (KTKPTQ) and Lys-224 contribute to the UTP site. 240-242 (RDA) provides a ligand contact to ATP. A Glutamine amidotransferase type-1 domain is found at 292–534 (KIALVGKYVE…VKASLTNKES (243 aa)). Residue Gly-354 coordinates L-glutamine. Cys-381 (nucleophile; for glutamine hydrolysis) is an active-site residue. L-glutamine contacts are provided by residues 382–385 (LGMQ), Glu-405, and Arg-462. Catalysis depends on residues His-507 and Glu-509.

Belongs to the CTP synthase family. In terms of assembly, homotetramer.

It carries out the reaction UTP + L-glutamine + ATP + H2O = CTP + L-glutamate + ADP + phosphate + 2 H(+). The enzyme catalyses L-glutamine + H2O = L-glutamate + NH4(+). It catalyses the reaction UTP + NH4(+) + ATP = CTP + ADP + phosphate + 2 H(+). Its pathway is pyrimidine metabolism; CTP biosynthesis via de novo pathway; CTP from UDP: step 2/2. Its activity is regulated as follows. Allosterically activated by GTP, when glutamine is the substrate; GTP has no effect on the reaction when ammonia is the substrate. The allosteric effector GTP functions by stabilizing the protein conformation that binds the tetrahedral intermediate(s) formed during glutamine hydrolysis. Inhibited by the product CTP, via allosteric rather than competitive inhibition. Functionally, catalyzes the ATP-dependent amination of UTP to CTP with either L-glutamine or ammonia as the source of nitrogen. Regulates intracellular CTP levels through interactions with the four ribonucleotide triphosphates. The sequence is that of CTP synthase from Bacillus anthracis (strain A0248).